The sequence spans 151 residues: Ribonuclease H (151 aa).

Residues 2-143 (SSNVIEIYAD…ADALANKGVD (142 aa)) enclose the RNase H type-1 domain. 4 residues coordinate Mg(2+): Asp-11, Glu-49, Asp-71, and Asp-135.

Belongs to the RNase H family. Monomer. The cofactor is Mg(2+).

The protein localises to the cytoplasm. The enzyme catalyses Endonucleolytic cleavage to 5'-phosphomonoester.. Endonuclease that specifically degrades the RNA of RNA-DNA hybrids. This is Ribonuclease H from Methylobacillus flagellatus (strain ATCC 51484 / DSM 6875 / VKM B-1610 / KT).